The following is a 39-amino-acid chain: MDRNPNPNNLPVELNRTSLYLGLLLVFVTGVLFSSYFFN.

Residues 18 to 38 (SLYLGLLLVFVTGVLFSSYFF) traverse the membrane as a helical segment.

The protein belongs to the PsbL family. In terms of assembly, PSII is composed of 1 copy each of membrane proteins PsbA, PsbB, PsbC, PsbD, PsbE, PsbF, PsbH, PsbI, PsbJ, PsbK, PsbL, PsbM, PsbT, PsbX, PsbY, PsbZ, Psb30/Ycf12, peripheral proteins PsbO, CyanoQ (PsbQ), PsbU, PsbV and a large number of cofactors. It forms dimeric complexes.

It is found in the cellular thylakoid membrane. Its function is as follows. One of the components of the core complex of photosystem II (PSII). PSII is a light-driven water:plastoquinone oxidoreductase that uses light energy to abstract electrons from H(2)O, generating O(2) and a proton gradient subsequently used for ATP formation. It consists of a core antenna complex that captures photons, and an electron transfer chain that converts photonic excitation into a charge separation. This subunit is found at the monomer-monomer interface and is required for correct PSII assembly and/or dimerization. The chain is Photosystem II reaction center protein L from Synechococcus sp. (strain RCC307).